The chain runs to 259 residues: Chloroplastic import inner membrane translocase subunit HP30-2 (259 aa).

A run of 4 helical transmembrane segments spans residues 55-75, 108-124, 135-155, and 158-178; these read AVVT…MGTL, NFAA…CVMK, AVVA…GLQG, and MNAI…FKLG.

Belongs to the Tim17/Tim22/Tim23 family. In terms of assembly, probable component of a protein-conducting channel made of HP30-1, HP30-2 and HP20 that mediates the import of transit sequence-less proteins into the chloroplastic inner membrane. Interacts with CEQORH.

It localises to the mitochondrion membrane. Its subcellular location is the plastid. It is found in the chloroplast inner membrane. In terms of biological role, together with HP30-1 and HP20, triggers the import and insertion of transit sequence-less multi-pass transmembrane proteins (e.g. CEQORH) into the chloroplastic inner membrane. This Arabidopsis thaliana (Mouse-ear cress) protein is Chloroplastic import inner membrane translocase subunit HP30-2.